A 204-amino-acid polypeptide reads, in one-letter code: Small ribosomal subunit protein uS4 (204 aa).

The S4 RNA-binding domain maps to 94-157 (RRLDNVVYRL…KKLEVFKENL (64 aa)).

The protein belongs to the universal ribosomal protein uS4 family. Part of the 30S ribosomal subunit. Contacts protein S5. The interaction surface between S4 and S5 is involved in control of translational fidelity.

One of the primary rRNA binding proteins, it binds directly to 16S rRNA where it nucleates assembly of the body of the 30S subunit. In terms of biological role, with S5 and S12 plays an important role in translational accuracy. In Sulfurihydrogenibium sp. (strain YO3AOP1), this protein is Small ribosomal subunit protein uS4.